The primary structure comprises 119 residues: NADH-quinone oxidoreductase subunit A (119 aa).

3 consecutive transmembrane segments (helical) span residues 9–29, 63–83, and 88–108; these read VLLFILVGIGVGVVPLLLGYV, LVAILFILFDLEIAFLFPWAV, and VGVTGFVAVLVFLAILVVGFA.

The protein belongs to the complex I subunit 3 family. NDH-1 is composed of 14 different subunits. Subunits NuoA, H, J, K, L, M, N constitute the membrane sector of the complex.

The protein resides in the cell inner membrane. It carries out the reaction a quinone + NADH + 5 H(+)(in) = a quinol + NAD(+) + 4 H(+)(out). Its function is as follows. NDH-1 shuttles electrons from NADH, via FMN and iron-sulfur (Fe-S) centers, to quinones in the respiratory chain. The immediate electron acceptor for the enzyme in this species is believed to be ubiquinone. Couples the redox reaction to proton translocation (for every two electrons transferred, four hydrogen ions are translocated across the cytoplasmic membrane), and thus conserves the redox energy in a proton gradient. The sequence is that of NADH-quinone oxidoreductase subunit A from Acidovorax sp. (strain JS42).